A 202-amino-acid polypeptide reads, in one-letter code: uncharacterized protein (202 aa).

The Cytoplasmic segment spans residues 1-6 (MITDFL). A helical; Signal-anchor for type II membrane protein membrane pass occupies residues 7–23 (LAFSILAVSTTLGVSNL). Residues 24–202 (NKQCRDLLQC…KNGKTRGHSG (179 aa)) are Extracellular-facing. N-linked (GlcNAc...) asparagine glycosylation is present at N53.

It is found in the membrane. This is an uncharacterized protein from Caenorhabditis elegans.